The sequence spans 122 residues: MIQPFTRLKVADNSGAKEIMCIKVLGGSKRRYASVGDIIVASVKKALPNGKIKKGQVVKAVIVRTKKEVQRENGSLIRFDDNAAVIIDAKKEPIGTRIFGPIAREVRYEGFQKITSLAPEVL.

Belongs to the universal ribosomal protein uL14 family. As to quaternary structure, part of the 50S ribosomal subunit. Forms a cluster with proteins L3 and L19. In the 70S ribosome, L14 and L19 interact and together make contacts with the 16S rRNA in bridges B5 and B8.

Binds to 23S rRNA. Forms part of two intersubunit bridges in the 70S ribosome. The polypeptide is Large ribosomal subunit protein uL14 (Nautilia profundicola (strain ATCC BAA-1463 / DSM 18972 / AmH)).